A 295-amino-acid polypeptide reads, in one-letter code: 33 kDa chaperonin (295 aa).

2 disulfides stabilise this stretch: Cys-237/Cys-239 and Cys-270/Cys-273.

This sequence belongs to the HSP33 family. Under oxidizing conditions two disulfide bonds are formed involving the reactive cysteines. Under reducing conditions zinc is bound to the reactive cysteines and the protein is inactive.

The protein resides in the cytoplasm. Its function is as follows. Redox regulated molecular chaperone. Protects both thermally unfolding and oxidatively damaged proteins from irreversible aggregation. Plays an important role in the bacterial defense system toward oxidative stress. The chain is 33 kDa chaperonin from Symbiobacterium thermophilum (strain DSM 24528 / JCM 14929 / IAM 14863 / T).